Consider the following 99-residue polypeptide: Large ribosomal subunit protein eL30 (99 aa).

It belongs to the eukaryotic ribosomal protein eL30 family.

The sequence is that of Large ribosomal subunit protein eL30 from Methanosarcina acetivorans (strain ATCC 35395 / DSM 2834 / JCM 12185 / C2A).